A 320-amino-acid chain; its full sequence is Ferrochelatase (320 aa).

The Fe cation site is built by His194 and Glu275.

The protein belongs to the ferrochelatase family. Monomer.

Its subcellular location is the cytoplasm. It carries out the reaction heme b + 2 H(+) = protoporphyrin IX + Fe(2+). It functions in the pathway porphyrin-containing compound metabolism; protoheme biosynthesis; protoheme from protoporphyrin-IX: step 1/1. Catalyzes the ferrous insertion into protoporphyrin IX. This Shigella boydii serotype 4 (strain Sb227) protein is Ferrochelatase.